A 207-amino-acid chain; its full sequence is 2,3-bisphosphoglycerate-dependent phosphoglycerate mutase (207 aa).

Residues 10 to 17 (RHGQSEWN), 23 to 24 (TG), R62, 89 to 92 (ERDY), K100, 116 to 117 (RR), and 160 to 161 (GN) contribute to the substrate site. Catalysis depends on H11, which acts as the Tele-phosphohistidine intermediate. E89 (proton donor/acceptor) is an active-site residue.

It belongs to the phosphoglycerate mutase family. BPG-dependent PGAM subfamily. In terms of assembly, homodimer.

The catalysed reaction is (2R)-2-phosphoglycerate = (2R)-3-phosphoglycerate. It functions in the pathway carbohydrate degradation; glycolysis; pyruvate from D-glyceraldehyde 3-phosphate: step 3/5. Its function is as follows. Catalyzes the interconversion of 2-phosphoglycerate and 3-phosphoglycerate. This Nitrobacter hamburgensis (strain DSM 10229 / NCIMB 13809 / X14) protein is 2,3-bisphosphoglycerate-dependent phosphoglycerate mutase.